A 152-amino-acid polypeptide reads, in one-letter code: Deoxyuridine 5'-triphosphate nucleotidohydrolase (152 aa).

Substrate-binding positions include 71 to 73 (RSG), N84, 88 to 90 (LID), and M98.

The protein belongs to the dUTPase family. Mg(2+) serves as cofactor.

It carries out the reaction dUTP + H2O = dUMP + diphosphate + H(+). It functions in the pathway pyrimidine metabolism; dUMP biosynthesis; dUMP from dCTP (dUTP route): step 2/2. In terms of biological role, this enzyme is involved in nucleotide metabolism: it produces dUMP, the immediate precursor of thymidine nucleotides and it decreases the intracellular concentration of dUTP so that uracil cannot be incorporated into DNA. The sequence is that of Deoxyuridine 5'-triphosphate nucleotidohydrolase from Shewanella baltica (strain OS155 / ATCC BAA-1091).